The following is a 310-amino-acid chain: Tagatose-6-phosphate kinase (310 aa).

This sequence belongs to the carbohydrate kinase PfkB family. LacC subfamily.

The enzyme catalyses D-tagatofuranose 6-phosphate + ATP = D-tagatofuranose 1,6-bisphosphate + ADP + H(+). The protein operates within carbohydrate metabolism; D-tagatose 6-phosphate degradation; D-glyceraldehyde 3-phosphate and glycerone phosphate from D-tagatose 6-phosphate: step 1/2. In Streptococcus mutans serotype c (strain ATCC 700610 / UA159), this protein is Tagatose-6-phosphate kinase.